The chain runs to 345 residues: 4-hydroxythreonine-4-phosphate dehydrogenase (345 aa).

Residues His-148 and Thr-149 each coordinate substrate. Positions 182, 227, and 282 each coordinate a divalent metal cation. 3 residues coordinate substrate: Lys-290, Asn-299, and Arg-308.

This sequence belongs to the PdxA family. Homodimer. Zn(2+) serves as cofactor. The cofactor is Mg(2+). It depends on Co(2+) as a cofactor.

It is found in the cytoplasm. The catalysed reaction is 4-(phosphooxy)-L-threonine + NAD(+) = 3-amino-2-oxopropyl phosphate + CO2 + NADH. It participates in cofactor biosynthesis; pyridoxine 5'-phosphate biosynthesis; pyridoxine 5'-phosphate from D-erythrose 4-phosphate: step 4/5. In terms of biological role, catalyzes the NAD(P)-dependent oxidation of 4-(phosphooxy)-L-threonine (HTP) into 2-amino-3-oxo-4-(phosphooxy)butyric acid which spontaneously decarboxylates to form 3-amino-2-oxopropyl phosphate (AHAP). The sequence is that of 4-hydroxythreonine-4-phosphate dehydrogenase from Bradyrhizobium diazoefficiens (strain JCM 10833 / BCRC 13528 / IAM 13628 / NBRC 14792 / USDA 110).